A 454-amino-acid chain; its full sequence is UPF0210 protein Mlab_1030 (454 aa).

Belongs to the UPF0210 family.

The protein is UPF0210 protein Mlab_1030 of Methanocorpusculum labreanum (strain ATCC 43576 / DSM 4855 / Z).